A 662-amino-acid polypeptide reads, in one-letter code: Glutathione hydrolase 7 (662 aa).

Residues 1–106 (MAAENEASQE…AAECSCRQDG (106 aa)) are Cytoplasmic-facing. Phosphoserine occurs at positions 17, 72, 79, and 83. The interval 26–90 (SFPRLPEDEP…DGSPLRETRK (65 aa)) is disordered. Positions 72–83 (SSSSEMGSQDGS) are enriched in low complexity. The helical; Signal-anchor for type II membrane protein transmembrane segment at 107-127 (LTVIVTACLTFATGVTVALVM) threads the bilayer. The Extracellular segment spans residues 128-662 (QIYFGDPQIF…SLDATGASIL (535 aa)). 9 N-linked (GlcNAc...) asparagine glycosylation sites follow: asparagine 198, asparagine 267, asparagine 283, asparagine 330, asparagine 353, asparagine 394, asparagine 519, asparagine 523, and asparagine 586.

The protein belongs to the gamma-glutamyltransferase family. As to quaternary structure, heterodimer composed of the light and heavy chains. The active site is located in the light chain. Post-translationally, cleaved by autocatalysis into a large and a small subunit and the autocatalytic cleavage is essential to the functional activation of the enzyme.

Its subcellular location is the membrane. The enzyme catalyses an N-terminal (5-L-glutamyl)-[peptide] + an alpha-amino acid = 5-L-glutamyl amino acid + an N-terminal L-alpha-aminoacyl-[peptide]. It carries out the reaction glutathione + H2O = L-cysteinylglycine + L-glutamate. The catalysed reaction is an S-substituted glutathione + H2O = an S-substituted L-cysteinylglycine + L-glutamate. Its pathway is sulfur metabolism; glutathione metabolism. Its function is as follows. Hydrolyzes and transfers gamma-glutamyl moieties from glutathione and other gamma-glutamyl compounds to acceptors. This Rattus norvegicus (Rat) protein is Glutathione hydrolase 7.